The chain runs to 309 residues: Porphobilinogen deaminase (309 aa).

C242 carries the post-translational modification S-(dipyrrolylmethanemethyl)cysteine.

Belongs to the HMBS family. In terms of assembly, monomer. It depends on dipyrromethane as a cofactor.

It carries out the reaction 4 porphobilinogen + H2O = hydroxymethylbilane + 4 NH4(+). Its pathway is porphyrin-containing compound metabolism; protoporphyrin-IX biosynthesis; coproporphyrinogen-III from 5-aminolevulinate: step 2/4. Functionally, tetrapolymerization of the monopyrrole PBG into the hydroxymethylbilane pre-uroporphyrinogen in several discrete steps. The polypeptide is Porphobilinogen deaminase (Syntrophobacter fumaroxidans (strain DSM 10017 / MPOB)).